Consider the following 222-residue polypeptide: Cytochrome b6 (222 aa).

The helical transmembrane segment at 39–59 (IFYCLGGITLTCFLIQFATGF) threads the bilayer. Residue C42 coordinates heme c. Residues H93 and H107 each contribute to the heme b site. 3 helical membrane-spanning segments follow: residues 97-117 (ASMM…TGGF), 123-143 (LTWV…VTGY), and 193-213 (LHTF…FLMI). Positions 194 and 209 each coordinate heme b.

Belongs to the cytochrome b family. PetB subfamily. In terms of assembly, the 4 large subunits of the cytochrome b6-f complex are cytochrome b6, subunit IV (17 kDa polypeptide, PetD), cytochrome f and the Rieske protein, while the 4 small subunits are PetG, PetL, PetM and PetN. The complex functions as a dimer. Requires heme b as cofactor. Heme c serves as cofactor.

It localises to the cellular thylakoid membrane. In terms of biological role, component of the cytochrome b6-f complex, which mediates electron transfer between photosystem II (PSII) and photosystem I (PSI), cyclic electron flow around PSI, and state transitions. This is Cytochrome b6 from Cyanothece sp. (strain PCC 7425 / ATCC 29141).